The following is a 353-amino-acid chain: UPF0283 membrane protein YPA_1696 (353 aa).

A run of 3 helical transmembrane segments spans residues M71–V91, I101–V121, and E214–W234.

Belongs to the UPF0283 family.

The protein resides in the cell inner membrane. The polypeptide is UPF0283 membrane protein YPA_1696 (Yersinia pestis bv. Antiqua (strain Antiqua)).